A 292-amino-acid chain; its full sequence is Insulin-like growth factor-binding protein 3 (292 aa).

The first 27 residues, 1–27 (MHPARPALWAAALTALTLLRGPPVARA), serve as a signal peptide directing secretion. The IGFBP N-terminal domain occupies 36–119 (PVVRCEPCDA…LNGRGFCANA (84 aa)). 6 disulfides stabilise this stretch: Cys40-Cys69, Cys43-Cys71, Cys51-Cys72, Cys60-Cys75, Cys83-Cys96, and Cys90-Cys116. 2 N-linked (GlcNAc...) asparagine glycosylation sites follow: Asn118 and Asn137. Disordered stretches follow at residues 128–152 (YLPSQPAPGNISESEEEHNAGSVES) and 178–212 (KGHARDSQRYKVDYESQSTDTQNFSSESKRETEYG). Ser149 is modified (phosphoserine). Over residues 178–191 (KGHARDSQRYKVDY) the composition is skewed to basic and acidic residues. The segment covering 192–203 (ESQSTDTQNFSS) has biased composition (polar residues). Residue Asn200 is glycosylated (N-linked (GlcNAc...) asparagine). Position 202 is a phosphoserine (Ser202). Residues 211–286 (YGPCRREMED…DTKGKDDVHC (76 aa)) form the Thyroglobulin type-1 domain. Intrachain disulfides connect Cys214-Cys241, Cys252-Cys263, and Cys265-Cys286.

As to quaternary structure, interacts with XLKD1. Binds IGF2 more than IGF1. Forms a ternary complex of about 140 to 150 kDa with IGF1 or IGF2 and a 85 kDa glycoprotein (ALS). Interacts with TMEM219. Post-translationally, phosphorylated by FAM20C in the extracellular medium.

It is found in the secreted. Its function is as follows. IGF-binding proteins prolong the half-life of the IGFs and have been shown to either inhibit or stimulate the growth promoting effects of the IGFs on cell culture. They alter the interaction of IGFs with their cell surface receptors. Also exhibits IGF-independent antiproliferative and apoptotic effects mediated by its receptor TMEM219/IGFBP-3R. Promotes testicular germ cell apoptosis. This Mus musculus (Mouse) protein is Insulin-like growth factor-binding protein 3 (Igfbp3).